The following is a 249-amino-acid chain: NH(3)-dependent NAD(+) synthetase (249 aa).

29-36 (GVSGGVDS) serves as a coordination point for ATP. Residue Asp-35 coordinates Mg(2+). Arg-116 lines the deamido-NAD(+) pocket. Position 136 (Thr-136) interacts with ATP. Residue Glu-141 participates in Mg(2+) binding. Residues Lys-149 and Asp-156 each contribute to the deamido-NAD(+) site. Lys-165 and Ser-187 together coordinate ATP. A deamido-NAD(+)-binding site is contributed by 233–234 (HK).

The protein belongs to the NAD synthetase family. In terms of assembly, homodimer.

The enzyme catalyses deamido-NAD(+) + NH4(+) + ATP = AMP + diphosphate + NAD(+) + H(+). It functions in the pathway cofactor biosynthesis; NAD(+) biosynthesis; NAD(+) from deamido-NAD(+) (ammonia route): step 1/1. Its function is as follows. Catalyzes the ATP-dependent amidation of deamido-NAD to form NAD. Uses ammonia as a nitrogen source. The sequence is that of NH(3)-dependent NAD(+) synthetase from Syntrophomonas wolfei subsp. wolfei (strain DSM 2245B / Goettingen).